We begin with the raw amino-acid sequence, 1115 residues long: Neural cell adhesion molecule 1 (1115 aa).

Positions 1-19 are cleaved as a signal peptide; the sequence is MLRTKDLIWTLFFLGTAVS. Ig-like C2-type domains follow at residues 20 to 111, 116 to 205, 212 to 302, 309 to 402, and 407 to 492; these read LQVD…ATVN, QKLM…KDIQ, PTVQ…ASIH, PKIT…MYLE, and PKLQ…ESLE. Topologically, residues 20–711 are extracellular; that stretch reads LQVDIVPSQG…NGSPTAGLST (692 aa). Cystine bridges form between Cys41–Cys96 and Cys139–Cys189. Residues 152-156 and 161-165 each bind heparin; these read KHKGR and KKDVR. An N-linked (GlcNAc...) asparagine; partial glycan is attached at Asn222. Residues Cys235 and Cys288 are joined by a disulfide bond. 5 N-linked (GlcNAc...) asparagine glycosylation sites follow: Asn316, Asn348, Asn424, Asn450, and Asn479. An intrachain disulfide couples Cys330 to Cys386. A disulfide bridge links Cys427 with Cys480. 2 consecutive Fibronectin type-III domains span residues 500 to 599 and 601 to 696; these read TPSS…TQPV and EPSA…SAQP. Thr706 carries GPI-anchor amidated serine lipidation. A helical membrane pass occupies residues 712 to 729; it reads GAIVGILIVIFVLLLVVM. Topologically, residues 730-1115 are cytoplasmic; that stretch reads DITCYFLNKC…TQTKENESKA (386 aa). Disordered stretches follow at residues 756 to 809, 839 to 912, and 924 to 1115; these read GAKG…TEPE, FATA…SASN, and VLSP…ESKA. Positions 758–799 are enriched in basic and acidic residues; it reads KGKDMEEGKAAFSKDESKEPIVEVRTEEERTPNHDGGKHTEP. Residues Ser770 and Ser774 each carry the phosphoserine modification. 3 stretches are compositionally biased toward low complexity: residues 800–809, 845–856, and 876–896; these read NETTPLTEPE, SPTSETTTLTSS, and TPSK…KVAP. A phosphoserine mark is found at Ser887 and Ser890. Composition is skewed to polar residues over residues 902–912 and 926–935; these read DTPTSAPSASN and SPSTPASAGE. At Ser926 the chain carries Phosphoserine. Phosphothreonine is present on Thr929. Low complexity-rich tracts occupy residues 936 to 974 and 999 to 1012; these read TSKA…PQAK and AATA…KAAT. A phosphoserine mark is found at Ser946 and Ser958. Phosphothreonine is present on Thr1001. Residue Ser1005 is modified to Phosphoserine. Basic and acidic residues-rich tracts occupy residues 1019–1037 and 1074–1091; these read EDLK…DLAK and KTEK…ESEA. Position 1030 is a phosphothreonine (Thr1030).

As to quaternary structure, interacts with MDK. Found in a complex with SLC39A6, SLC39A10 and with NCAM1; this complex controls NCAM1 phosphorylation and integration into focal adhesion complexes during epithelial-tomesenchymal transition. Interacts with synaptic plasticity regulator PANTS. Polysialylated by ST8SIA2 and ST8SIA4. Polysialylation modulates cell interactions by confering both attractive and repulsive properties that are highly regulated by ST8SIA2 and ST8SIA4. Polysialylation is formed on a-2,3-linked sialic acid of core glycans.

It is found in the cell membrane. Functionally, this protein is a cell adhesion molecule involved in neuron-neuron adhesion, neurite fasciculation, outgrowth of neurites, etc. The sequence is that of Neural cell adhesion molecule 1 from Mus musculus (Mouse).